Consider the following 161-residue polypeptide: HMG1/2-like protein (161 aa).

Disordered stretches follow at residues 1–46 (MKGA…KRAP), 60–91 (FKQK…EKAP), and 113–161 (GESA…DDDE). Basic and acidic residues-rich tracts occupy residues 10–27 (AKAD…EKPA) and 77–89 (AGER…ESEK). The HMG box DNA-binding region spans 42-111 (PKRAPSAFFV…EYNKAIAAYN (70 aa)). Residues 114–123 (ESAAAAAPKK) are compositionally biased toward low complexity. A compositionally biased stretch (acidic residues) spans 145–161 (NDDDDDEGSDEDEDDDE).

It belongs to the HMGB family.

It localises to the nucleus. The chain is HMG1/2-like protein from Triticum aestivum (Wheat).